A 597-amino-acid chain; its full sequence is Gamma-terpinene synthase, chloroplastic (597 aa).

The transit peptide at methionine 1–serine 47 directs the protein to the chloroplast. Residues aspartate 350 and aspartate 354 each coordinate Mn(2+). Positions aspartate 350–aspartate 354 match the DDXXD motif motif. Homodimerization stretches follow at residues tyrosine 356–leucine 362 and glutamate 428–leucine 464. Aspartate 494 and glutamate 502 together coordinate Mn(2+).

Belongs to the terpene synthase family. In terms of assembly, homodimer. Mn(2+) is required as a cofactor. It depends on Mg(2+) as a cofactor.

The protein resides in the plastid. It is found in the chloroplast. The catalysed reaction is (2E)-geranyl diphosphate = gamma-terpinene + diphosphate. The protein operates within secondary metabolite biosynthesis; terpenoid biosynthesis. In terms of biological role, involved in the biosynthesis of phenolic monoterpenes natural products thymol and carvacrol which have a broad range of biological activities acting as antimicrobial compounds, insecticides, antioxidants and pharmaceutical agents. Monoterpene synthase which catalyzes the conversion of geranyl diphosphate (GPP) to gamma-terpinene and minor amounts of other monoterpenes (e.g. alpha-thujene, alpha-terpinene, myrcene, sabinene, (+)-R-limonene, alpha-pinene and alpha-phellandrene). The protein is Gamma-terpinene synthase, chloroplastic of Thymus caespititius (Cretan thyme).